Here is a 361-residue protein sequence, read N- to C-terminus: 3-dehydroquinate synthase (361 aa).

NAD(+) contacts are provided by residues 72-77 (SGEKEK), 130-131 (TT), lysine 142, and lysine 151. Zn(2+) contacts are provided by glutamate 184, histidine 247, and histidine 264.

The protein belongs to the sugar phosphate cyclases superfamily. Dehydroquinate synthase family. Co(2+) serves as cofactor. Requires Zn(2+) as cofactor. It depends on NAD(+) as a cofactor.

Its subcellular location is the cytoplasm. It catalyses the reaction 7-phospho-2-dehydro-3-deoxy-D-arabino-heptonate = 3-dehydroquinate + phosphate. The protein operates within metabolic intermediate biosynthesis; chorismate biosynthesis; chorismate from D-erythrose 4-phosphate and phosphoenolpyruvate: step 2/7. In terms of biological role, catalyzes the conversion of 3-deoxy-D-arabino-heptulosonate 7-phosphate (DAHP) to dehydroquinate (DHQ). In Bacillus cereus (strain AH820), this protein is 3-dehydroquinate synthase.